Here is a 300-residue protein sequence, read N- to C-terminus: MSYRELIAELAREHAEEFSDALLELGALSVSVEDADADTPDEQPLFGEPGLTPDRTAWQRSRVIALLAPEHEPAVLLTAAANEIGLPAAPSFTVREVEDQDWVRLTQSQFDPIKIGERIWVVPSWHDAPDPEALVLELDPGLAFGTGSHPTTRLCMEWLEQSVQPEQSVLDYGCGSGILAILAKKCGANPVYGIDIDPQAVESARHNSERNRAEVIYGLPDECPTGEFDIVVANILSNPLKLMASMLTSKVKPGGKIALSGILARQADEVAQVYSRWIDISVWREHEGWVCLSGTRRESH.

Positions 152, 173, 195, and 234 each coordinate S-adenosyl-L-methionine.

This sequence belongs to the methyltransferase superfamily. PrmA family.

The protein localises to the cytoplasm. The enzyme catalyses L-lysyl-[protein] + 3 S-adenosyl-L-methionine = N(6),N(6),N(6)-trimethyl-L-lysyl-[protein] + 3 S-adenosyl-L-homocysteine + 3 H(+). Functionally, methylates ribosomal protein L11. This chain is Ribosomal protein L11 methyltransferase, found in Paraburkholderia phytofirmans (strain DSM 17436 / LMG 22146 / PsJN) (Burkholderia phytofirmans).